The sequence spans 594 residues: Ferredoxin--nitrite reductase, chloroplastic (594 aa).

The N-terminal 32 residues, methionine 1–arginine 32, are a transit peptide targeting the chloroplast. Over residues serine 13–asparagine 22 the composition is skewed to low complexity. The interval serine 13–alanine 36 is disordered. [4Fe-4S] cluster-binding residues include cysteine 473, cysteine 479, cysteine 514, and cysteine 518. Residue cysteine 518 participates in siroheme binding.

The protein belongs to the nitrite and sulfite reductase 4Fe-4S domain family. Monomer. It depends on siroheme as a cofactor. Requires [4Fe-4S] cluster as cofactor.

It localises to the plastid. Its subcellular location is the chloroplast. It carries out the reaction 6 oxidized [2Fe-2S]-[ferredoxin] + NH4(+) + 2 H2O = nitrite + 6 reduced [2Fe-2S]-[ferredoxin] + 8 H(+). It functions in the pathway nitrogen metabolism; nitrate reduction (assimilation). This chain is Ferredoxin--nitrite reductase, chloroplastic (NIR), found in Spinacia oleracea (Spinach).